Here is a 190-residue protein sequence, read N- to C-terminus: Elongation factor P-like protein (190 aa).

The protein belongs to the elongation factor P family.

This is Elongation factor P-like protein from Serratia proteamaculans (strain 568).